We begin with the raw amino-acid sequence, 6919 residues long: Nonribosomal peptide synthetase easA (6919 aa).

Residues 17-93 (TNNEVVEKDI…ELCQSVKLAE (77 aa)) enclose the Carrier 1 domain. O-(pantetheine 4'-phosphoryl)serine is present on serine 54. The segment at 123–427 (EAQKLYASTK…FLRKVKDTRM (305 aa)) is epimerization 1. The tract at residues 294-319 (FRRSTPVESTNDERNTNERQHNRHQN) is disordered. The segment covering 304–319 (NDERNTNERQHNRHQN) has biased composition (basic and acidic residues). The segment at 604 to 981 (LNVELDCGRL…ISTTQEINQL (378 aa)) is condensation 1. The adenylation 1 stretch occupies residues 1003 to 1394 (QRLRRPDAWA…GRRDTQIKVR (392 aa)). The Carrier 2 domain maps to 1531–1608 (EPETLLERQV…QLAQTAEVKD (78 aa)). Residue serine 1569 is modified to O-(pantetheine 4'-phosphoryl)serine. The tract at residues 1617–2031 (LLSPMQKWYF…ANAISALGTE (415 aa)) is epimerization 2. Residues 2072–2509 (VEDIYPCSPI…VGQLNTVTPK (438 aa)) form a condensation 2 region. Residues 2541–2930 (RPNATAVCAW…ARKDSQVKVR (390 aa)) form an adenylation 2 region. The region spanning 3067–3143 (APSTFMEKKL…EMAAHLEAQM (77 aa)) is the Carrier 3 domain. Serine 3104 bears the O-(pantetheine 4'-phosphoryl)serine mark. The condensation 3 stretch occupies residues 3188–3599 (EDVYPCTPLQ…LLSKDEARRL (412 aa)). An adenylation 3 region spans residues 3620-4018 (QHVSTNPYAP…GRRDGQVKIR (399 aa)). One can recognise a Carrier 4 domain in the interval 4151–4228 (TPSTSEEKNI…QLAKKAVIKT (78 aa)). Serine 4188 bears the O-(pantetheine 4'-phosphoryl)serine mark. Positions 4282 to 4708 (ESIYYCSPIQ…EIDVIPTGDV (427 aa)) are condensation 4. Positions 4732–5133 (EQALSQPGAQ…GRADGQIKIR (402 aa)) are adenylation 4. One can recognise a Carrier 5 domain in the interval 5260–5337 (ALSTETERRL…DMANTIANSE (78 aa)). Serine 5296 carries the O-(pantetheine 4'-phosphoryl)serine modification. Positions 5380-5775 (EDAYPCTPLQ…VFGQLQSAAN (396 aa)) are condensation 5. An adenylation 5 region spans residues 5824-6216 (SCPDAQAVHA…IGRRDTQVKI (393 aa)). One can recognise a Carrier 6 domain in the interval 6344 to 6421 (EPATVTERLL…DMATLIDRKT (78 aa)). Serine 6381 is modified (O-(pantetheine 4'-phosphoryl)serine).

Its pathway is antibiotic biosynthesis. Functionally, nonribosomal peptide synthetase; part of the gene cluster that mediates the biosynthesis of emericellamides, secondary metabolites acting as antibiotics. The biosynthesis of emericellamides initiates from the highly reducing polyketide synthase easB which catalyzes the formation of the linear polyketide chain. EasB produces several polyketides that can be further processed by the downstream enzymes. The polyketides are released from easB as linear polyketide carboxylic acids, which are converted to CoA thioesters by the acyl-CoA ligase easD. The substrates are then loaded onto the acyltransferase easC, which shuttles them to the first thiolation (T) domain of the nonribosomal peptide synthetase easA. EasA then performs condensation of the polyketides with one glycine, two alanine, one valine and one leucine residues. A last step of cyclization leads to the production of emericellamides. The polypeptide is Nonribosomal peptide synthetase easA (Emericella nidulans (strain FGSC A4 / ATCC 38163 / CBS 112.46 / NRRL 194 / M139) (Aspergillus nidulans)).